Here is a 373-residue protein sequence, read N- to C-terminus: Leucine aminopeptidase 1 (373 aa).

The signal sequence occupies residues 1 to 18 (MKLLSVLALSATATSVLG). The Zn(2+) site is built by His-176 and Asp-195. Residue Asn-196 is glycosylated (N-linked (GlcNAc...) asparagine). Positions 234 and 261 each coordinate Zn(2+). Asn-288 is a glycosylation site (N-linked (GlcNAc...) asparagine). Cys-310 and Cys-314 form a disulfide bridge. His-343 serves as a coordination point for Zn(2+). Residue Asn-348 is glycosylated (N-linked (GlcNAc...) asparagine).

It belongs to the peptidase M28 family. M28E subfamily. Monomer. Requires Zn(2+) as cofactor.

Its subcellular location is the secreted. Its activity is regulated as follows. Activity is inhibited by EDTA, o-phenanthroline, bestatin and amastatin. Functionally, extracellular aminopeptidase which contributes to pathogenicity. The polypeptide is Leucine aminopeptidase 1 (LAP1) (Trichophyton rubrum (Athlete's foot fungus)).